Consider the following 227-residue polypeptide: Phosphoribosylformylglycinamidine synthase subunit PurQ (227 aa).

The region spanning 2-226 is the Glutamine amidotransferase type-1 domain; it reads KFAVIQFPGS…VKAWKEEQVN (225 aa). The Nucleophile role is filled by cysteine 86. Residues histidine 195 and glutamate 197 contribute to the active site.

As to quaternary structure, part of the FGAM synthase complex composed of 1 PurL, 1 PurQ and 2 PurS subunits.

The protein resides in the cytoplasm. It carries out the reaction N(2)-formyl-N(1)-(5-phospho-beta-D-ribosyl)glycinamide + L-glutamine + ATP + H2O = 2-formamido-N(1)-(5-O-phospho-beta-D-ribosyl)acetamidine + L-glutamate + ADP + phosphate + H(+). It catalyses the reaction L-glutamine + H2O = L-glutamate + NH4(+). The protein operates within purine metabolism; IMP biosynthesis via de novo pathway; 5-amino-1-(5-phospho-D-ribosyl)imidazole from N(2)-formyl-N(1)-(5-phospho-D-ribosyl)glycinamide: step 1/2. In terms of biological role, part of the phosphoribosylformylglycinamidine synthase complex involved in the purines biosynthetic pathway. Catalyzes the ATP-dependent conversion of formylglycinamide ribonucleotide (FGAR) and glutamine to yield formylglycinamidine ribonucleotide (FGAM) and glutamate. The FGAM synthase complex is composed of three subunits. PurQ produces an ammonia molecule by converting glutamine to glutamate. PurL transfers the ammonia molecule to FGAR to form FGAM in an ATP-dependent manner. PurS interacts with PurQ and PurL and is thought to assist in the transfer of the ammonia molecule from PurQ to PurL. In Listeria monocytogenes serotype 4b (strain CLIP80459), this protein is Phosphoribosylformylglycinamidine synthase subunit PurQ.